We begin with the raw amino-acid sequence, 372 residues long: Erythronate-4-phosphate dehydrogenase (372 aa).

Substrate contacts are provided by serine 45 and threonine 66. Aspartate 146 contributes to the NAD(+) binding site. Residue arginine 209 is part of the active site. Aspartate 233 lines the NAD(+) pocket. Glutamate 238 is a catalytic residue. Histidine 255 (proton donor) is an active-site residue. Glycine 258 provides a ligand contact to NAD(+). Substrate is bound at residue tyrosine 259.

Belongs to the D-isomer specific 2-hydroxyacid dehydrogenase family. PdxB subfamily. As to quaternary structure, homodimer.

Its subcellular location is the cytoplasm. The catalysed reaction is 4-phospho-D-erythronate + NAD(+) = (R)-3-hydroxy-2-oxo-4-phosphooxybutanoate + NADH + H(+). The protein operates within cofactor biosynthesis; pyridoxine 5'-phosphate biosynthesis; pyridoxine 5'-phosphate from D-erythrose 4-phosphate: step 2/5. Functionally, catalyzes the oxidation of erythronate-4-phosphate to 3-hydroxy-2-oxo-4-phosphonooxybutanoate. The chain is Erythronate-4-phosphate dehydrogenase from Blochmanniella floridana.